The sequence spans 98 residues: NADH-ubiquinone oxidoreductase chain 4L (98 aa).

A run of 2 helical transmembrane segments spans residues Ser29 to Leu49 and Ile61 to Val81.

This sequence belongs to the complex I subunit 4L family. Core subunit of respiratory chain NADH dehydrogenase (Complex I) which is composed of 45 different subunits.

It localises to the mitochondrion inner membrane. The catalysed reaction is a ubiquinone + NADH + 5 H(+)(in) = a ubiquinol + NAD(+) + 4 H(+)(out). Its function is as follows. Core subunit of the mitochondrial membrane respiratory chain NADH dehydrogenase (Complex I) which catalyzes electron transfer from NADH through the respiratory chain, using ubiquinone as an electron acceptor. Part of the enzyme membrane arm which is embedded in the lipid bilayer and involved in proton translocation. In Cheirogaleus medius (Fat-tailed dwarf lemur), this protein is NADH-ubiquinone oxidoreductase chain 4L (MT-ND4L).